The chain runs to 158 residues: Transcription factor BTF3 homolog 4 (158 aa).

An NAC-A/B domain is found at 33 to 98 (TADDKKLQSS…AEVKQITEML (66 aa)). The segment at 123–158 (QVLDSKASKPEDIEEEDDDVPELVGNFDEASKNEAN) is disordered. Acidic residues predominate over residues 134–143 (DIEEEDDDVP).

It belongs to the NAC-beta family.

The sequence is that of Transcription factor BTF3 homolog 4 (btf3l4) from Xenopus laevis (African clawed frog).